The chain runs to 244 residues: tRNA pseudouridine synthase A (244 aa).

The Nucleophile role is filled by aspartate 55. Tyrosine 113 provides a ligand contact to substrate.

This sequence belongs to the tRNA pseudouridine synthase TruA family. Homodimer.

The enzyme catalyses uridine(38/39/40) in tRNA = pseudouridine(38/39/40) in tRNA. In terms of biological role, formation of pseudouridine at positions 38, 39 and 40 in the anticodon stem and loop of transfer RNAs. This is tRNA pseudouridine synthase A from Phytoplasma mali (strain AT).